The chain runs to 134 residues: Profilin-3 (134 aa).

The cysteines at positions 13 and 118 are disulfide-linked. The Involved in PIP2 interaction signature appears at 84–100 (AVIRGKKGSGGITIKKT). T114 carries the phosphothreonine modification.

This sequence belongs to the profilin family. As to quaternary structure, occurs in many kinds of cells as a complex with monomeric actin in a 1:1 ratio. Post-translationally, phosphorylated by MAP kinases.

It is found in the cytoplasm. It localises to the cytoskeleton. Binds to actin and affects the structure of the cytoskeleton. At high concentrations, profilin prevents the polymerization of actin, whereas it enhances it at low concentrations. The sequence is that of Profilin-3 from Olea europaea (Common olive).